Reading from the N-terminus, the 329-residue chain is GMP reductase (329 aa).

Cys178 functions as the Thioimidate intermediate in the catalytic mechanism. Val207–Val230 provides a ligand contact to NADP(+).

The protein belongs to the IMPDH/GMPR family. GuaC type 2 subfamily.

The catalysed reaction is IMP + NH4(+) + NADP(+) = GMP + NADPH + 2 H(+). Functionally, catalyzes the irreversible NADPH-dependent deamination of GMP to IMP. It functions in the conversion of nucleobase, nucleoside and nucleotide derivatives of G to A nucleotides, and in maintaining the intracellular balance of A and G nucleotides. This is GMP reductase from Lactococcus lactis subsp. cremoris (strain MG1363).